Reading from the N-terminus, the 297-residue chain is MLYQQIQSNKRRTIVLLFVFFILVALVGAAVGYLLLNSLETGVVAAIVIGAIYTIIMVSNSTNVVMAMNHGHEIKNADQAPELWHTVEDMAMVAQVPMPRVFIIDDDSPNAFATGNNPEHSAVAATTGLLKIMNRSELEGVIAHEMSHVRNYDIRISTIALALAAAITLLTNIGGNWWFWGSGDRRRNDDRNGGGGLQILLLVFSILMMVLAPLAAAAIQMAISRNREYLADAGSAELTRNPQGLISALRKLGNAQPMKDVDSSSAALYISNPLKNKERLFDTHPPIEERIDRLEKM.

2 helical membrane-spanning segments follow: residues 14–34 and 38–58; these read IVLL…VGYL and SLET…IIMV. Histidine 144 contributes to the Zn(2+) binding site. Glutamate 145 is an active-site residue. Histidine 148 contributes to the Zn(2+) binding site. 2 consecutive transmembrane segments (helical) span residues 159–179 and 199–219; these read IALA…NWWF and ILLL…AAAI. Glutamate 228 lines the Zn(2+) pocket.

This sequence belongs to the peptidase M48B family. Requires Zn(2+) as cofactor.

It is found in the cell membrane. The sequence is that of Protease HtpX homolog from Leuconostoc mesenteroides subsp. mesenteroides (strain ATCC 8293 / DSM 20343 / BCRC 11652 / CCM 1803 / JCM 6124 / NCDO 523 / NBRC 100496 / NCIMB 8023 / NCTC 12954 / NRRL B-1118 / 37Y).